The primary structure comprises 355 residues: UDP-N-acetylglucosamine--N-acetylmuramyl-(pentapeptide) pyrophosphoryl-undecaprenol N-acetylglucosamine transferase (355 aa).

Residues 15–17 (TGG), N127, R163, S191, I244, 263–268 (ALTVSE), and Q288 contribute to the UDP-N-acetyl-alpha-D-glucosamine site.

The protein belongs to the glycosyltransferase 28 family. MurG subfamily.

It localises to the cell inner membrane. The enzyme catalyses di-trans,octa-cis-undecaprenyl diphospho-N-acetyl-alpha-D-muramoyl-L-alanyl-D-glutamyl-meso-2,6-diaminopimeloyl-D-alanyl-D-alanine + UDP-N-acetyl-alpha-D-glucosamine = di-trans,octa-cis-undecaprenyl diphospho-[N-acetyl-alpha-D-glucosaminyl-(1-&gt;4)]-N-acetyl-alpha-D-muramoyl-L-alanyl-D-glutamyl-meso-2,6-diaminopimeloyl-D-alanyl-D-alanine + UDP + H(+). It functions in the pathway cell wall biogenesis; peptidoglycan biosynthesis. Cell wall formation. Catalyzes the transfer of a GlcNAc subunit on undecaprenyl-pyrophosphoryl-MurNAc-pentapeptide (lipid intermediate I) to form undecaprenyl-pyrophosphoryl-MurNAc-(pentapeptide)GlcNAc (lipid intermediate II). The chain is UDP-N-acetylglucosamine--N-acetylmuramyl-(pentapeptide) pyrophosphoryl-undecaprenol N-acetylglucosamine transferase from Escherichia coli O139:H28 (strain E24377A / ETEC).